Here is a 45-residue protein sequence, read N- to C-terminus: Defensin Tk-AMP-D3 (45 aa).

4 disulfide bridges follow: cysteine 3/cysteine 45, cysteine 14/cysteine 34, cysteine 20/cysteine 39, and cysteine 24/cysteine 41.

Functionally, plant defense peptide. This Triticum kiharae (Wheat) protein is Defensin Tk-AMP-D3.